The primary structure comprises 300 residues: Ribosomal protein L11 methyltransferase (300 aa).

Residues Thr-152, Gly-173, Asp-195, and Asn-234 each contribute to the S-adenosyl-L-methionine site.

It belongs to the methyltransferase superfamily. PrmA family.

The protein localises to the cytoplasm. It catalyses the reaction L-lysyl-[protein] + 3 S-adenosyl-L-methionine = N(6),N(6),N(6)-trimethyl-L-lysyl-[protein] + 3 S-adenosyl-L-homocysteine + 3 H(+). In terms of biological role, methylates ribosomal protein L11. This Burkholderia lata (strain ATCC 17760 / DSM 23089 / LMG 22485 / NCIMB 9086 / R18194 / 383) protein is Ribosomal protein L11 methyltransferase.